The following is a 159-amino-acid chain: NAD(P)H-quinone oxidoreductase subunit I, chloroplastic (159 aa).

4Fe-4S ferredoxin-type domains are found at residues 55–84 and 95–124; these read GRIH…VDWN and KNYS…MTEE. The [4Fe-4S] cluster site is built by Cys64, Cys67, Cys70, Cys74, Cys104, Cys107, Cys110, and Cys114.

Belongs to the complex I 23 kDa subunit family. In terms of assembly, NDH is composed of at least 16 different subunits, 5 of which are encoded in the nucleus. [4Fe-4S] cluster serves as cofactor.

Its subcellular location is the plastid. It is found in the chloroplast thylakoid membrane. The catalysed reaction is a plastoquinone + NADH + (n+1) H(+)(in) = a plastoquinol + NAD(+) + n H(+)(out). The enzyme catalyses a plastoquinone + NADPH + (n+1) H(+)(in) = a plastoquinol + NADP(+) + n H(+)(out). Functionally, NDH shuttles electrons from NAD(P)H:plastoquinone, via FMN and iron-sulfur (Fe-S) centers, to quinones in the photosynthetic chain and possibly in a chloroplast respiratory chain. The immediate electron acceptor for the enzyme in this species is believed to be plastoquinone. Couples the redox reaction to proton translocation, and thus conserves the redox energy in a proton gradient. The polypeptide is NAD(P)H-quinone oxidoreductase subunit I, chloroplastic (Chara vulgaris (Common stonewort)).